A 199-amino-acid chain; its full sequence is MIGWLHGQIIDKHQPGKLVLDVNGVGYDVETSLNTFFQIENGNQPIGLHIHTIVREDALLLYGFLDKEERSLFRSLIKVNGVGPKLAMTVLSSISPKEFIQCIHQENAALLTKLPGIGKKTAERLVVEMRDSIKQFDGSVSDTFQKQAGSTHSQQEAISALEALGYKPQEAWKVVNKIDNGNKSCEQLIREALQILSSR.

Positions 1 to 65 (MIGWLHGQII…EDALLLYGFL (65 aa)) are domain I. Residues 66–144 (DKEERSLFRS…QFDGSVSDTF (79 aa)) are domain II. The interval 144–148 (FQKQA) is flexible linker. Positions 149 to 199 (GSTHSQQEAISALEALGYKPQEAWKVVNKIDNGNKSCEQLIREALQILSSR) are domain III.

Belongs to the RuvA family. Homotetramer. Forms an RuvA(8)-RuvB(12)-Holliday junction (HJ) complex. HJ DNA is sandwiched between 2 RuvA tetramers; dsDNA enters through RuvA and exits via RuvB. An RuvB hexamer assembles on each DNA strand where it exits the tetramer. Each RuvB hexamer is contacted by two RuvA subunits (via domain III) on 2 adjacent RuvB subunits; this complex drives branch migration. In the full resolvosome a probable DNA-RuvA(4)-RuvB(12)-RuvC(2) complex forms which resolves the HJ.

Its subcellular location is the cytoplasm. Its function is as follows. The RuvA-RuvB-RuvC complex processes Holliday junction (HJ) DNA during genetic recombination and DNA repair, while the RuvA-RuvB complex plays an important role in the rescue of blocked DNA replication forks via replication fork reversal (RFR). RuvA specifically binds to HJ cruciform DNA, conferring on it an open structure. The RuvB hexamer acts as an ATP-dependent pump, pulling dsDNA into and through the RuvAB complex. HJ branch migration allows RuvC to scan DNA until it finds its consensus sequence, where it cleaves and resolves the cruciform DNA. The chain is Holliday junction branch migration complex subunit RuvA from Legionella pneumophila (strain Paris).